Here is a 314-residue protein sequence, read N- to C-terminus: Olfactory receptor 5P6 (314 aa).

Over 1–28 (MAFQEDGNHTAVTEFVLFGLTDDPVLRV) the chain is Extracellular. The N-linked (GlcNAc...) asparagine glycan is linked to Asn8. A helical membrane pass occupies residues 29–49 (ILFIIFLCIYLVTVSGNLSTI). The Cytoplasmic portion of the chain corresponds to 50-57 (LLIRVSSQ). Residues 58–78 (LHHPMYFFLSHLAFADIGYSS) traverse the membrane as a helical segment. The Extracellular segment spans residues 79–102 (SVTPNMLVNFLVERHTISYIGCAI). Cys100 and Cys192 are oxidised to a cystine. A helical transmembrane segment spans residues 103–123 (QLGSVVFFGSSECFILAAMAY). Topologically, residues 124-136 (DRFMAICNPLLYS) are cytoplasmic. A helical transmembrane segment spans residues 137-157 (TKMSTQVCVQLLLIAYIGGFL). At 158–199 (NTWSFTICFYSLVFCGPNGVNHFFCDFAPLIELSCSDVSVPA) the chain is on the extracellular side. The chain crosses the membrane as a helical span at residues 200 to 220 (TVPSFTAGSIIVVTVIVIAIS). Residues 221-240 (YIYILITILKMHSTEGRQKA) are Cytoplasmic-facing. Residues 241-261 (FSTCTSHLTAVTLFYGTITFI) traverse the membrane as a helical segment. The Extracellular portion of the chain corresponds to 262–274 (YVMPKSSFSTDQN). A helical transmembrane segment spans residues 275–295 (KVVSVFYMVVIPMLNPLIYSL). Topologically, residues 296 to 314 (RNNEIKGALKRQIGRKIFS) are cytoplasmic.

Belongs to the G-protein coupled receptor 1 family.

The protein resides in the cell membrane. Potential odorant receptor. This Mus musculus (Mouse) protein is Olfactory receptor 5P6.